Here is a 400-residue protein sequence, read N- to C-terminus: S-adenosylmethionine synthase (400 aa).

136-141 (GTGSTD) contacts ATP.

Belongs to the AdoMet synthase 2 family. It depends on Mg(2+) as a cofactor.

The enzyme catalyses L-methionine + ATP + H2O = S-adenosyl-L-methionine + phosphate + diphosphate. Its pathway is amino-acid biosynthesis; S-adenosyl-L-methionine biosynthesis; S-adenosyl-L-methionine from L-methionine: step 1/1. In terms of biological role, catalyzes the formation of S-adenosylmethionine from methionine and ATP. The sequence is that of S-adenosylmethionine synthase from Methanospirillum hungatei JF-1 (strain ATCC 27890 / DSM 864 / NBRC 100397 / JF-1).